The following is a 240-amino-acid chain: UDP-2,3-diacylglucosamine hydrolase (240 aa).

Mn(2+)-binding residues include Asp-8, His-10, Asp-41, Asn-79, and His-114. 79 to 80 is a binding site for substrate; sequence NR. Positions 122, 160, 164, 167, and 195 each coordinate substrate. Mn(2+) contacts are provided by His-195 and His-197.

This sequence belongs to the LpxH family. The cofactor is Mn(2+).

The protein localises to the cell inner membrane. The catalysed reaction is UDP-2-N,3-O-bis[(3R)-3-hydroxytetradecanoyl]-alpha-D-glucosamine + H2O = 2-N,3-O-bis[(3R)-3-hydroxytetradecanoyl]-alpha-D-glucosaminyl 1-phosphate + UMP + 2 H(+). It functions in the pathway glycolipid biosynthesis; lipid IV(A) biosynthesis; lipid IV(A) from (3R)-3-hydroxytetradecanoyl-[acyl-carrier-protein] and UDP-N-acetyl-alpha-D-glucosamine: step 4/6. In terms of biological role, hydrolyzes the pyrophosphate bond of UDP-2,3-diacylglucosamine to yield 2,3-diacylglucosamine 1-phosphate (lipid X) and UMP by catalyzing the attack of water at the alpha-P atom. Involved in the biosynthesis of lipid A, a phosphorylated glycolipid that anchors the lipopolysaccharide to the outer membrane of the cell. In Photorhabdus laumondii subsp. laumondii (strain DSM 15139 / CIP 105565 / TT01) (Photorhabdus luminescens subsp. laumondii), this protein is UDP-2,3-diacylglucosamine hydrolase.